A 77-amino-acid chain; its full sequence is MSSIDKRIKEIVAEQLGVDEAQVTNEASFMDDLGADSLDTVELVMALEEEFDIEISDEDAEKIQSVQDAIDYITDHT.

One can recognise a Carrier domain in the interval 2 to 77; that stretch reads SSIDKRIKEI…DAIDYITDHT (76 aa). Residue serine 37 is modified to O-(pantetheine 4'-phosphoryl)serine.

This sequence belongs to the acyl carrier protein (ACP) family. 4'-phosphopantetheine is transferred from CoA to a specific serine of apo-ACP by AcpS. This modification is essential for activity because fatty acids are bound in thioester linkage to the sulfhydryl of the prosthetic group.

It is found in the cytoplasm. The protein operates within lipid metabolism; fatty acid biosynthesis. Its function is as follows. Carrier of the growing fatty acid chain in fatty acid biosynthesis. The sequence is that of Acyl carrier protein from Geotalea daltonii (strain DSM 22248 / JCM 15807 / FRC-32) (Geobacter daltonii).